Consider the following 95-residue polypeptide: MKDPRDVLKRPVITERSADLMTEKKYTFEVDVKANKTEVKDAVEQIFGVKVEKVNIMNYKGKFKRVGRYSGMTNKRRKAIVKLTEDSKEIEIFEA.

Belongs to the universal ribosomal protein uL23 family. Part of the 50S ribosomal subunit. Contacts protein L29, and trigger factor when it is bound to the ribosome.

Functionally, one of the early assembly proteins it binds 23S rRNA. One of the proteins that surrounds the polypeptide exit tunnel on the outside of the ribosome. Forms the main docking site for trigger factor binding to the ribosome. This is Large ribosomal subunit protein uL23 from Bacillus licheniformis (strain ATCC 14580 / DSM 13 / JCM 2505 / CCUG 7422 / NBRC 12200 / NCIMB 9375 / NCTC 10341 / NRRL NRS-1264 / Gibson 46).